The sequence spans 156 residues: Large ribosomal subunit protein uL22c (156 aa).

It belongs to the universal ribosomal protein uL22 family. In terms of assembly, part of the 50S ribosomal subunit.

It localises to the plastid. It is found in the chloroplast. Functionally, this protein binds specifically to 23S rRNA. The globular domain of the protein is located near the polypeptide exit tunnel on the outside of the subunit, while an extended beta-hairpin is found that lines the wall of the exit tunnel in the center of the 70S ribosome. This is Large ribosomal subunit protein uL22c (rpl22) from Buxus microphylla (Littleleaf boxwood).